The following is a 279-amino-acid chain: MMPTDGSYFHLHLVSDSTGETLITVSRAVAAQYANVSPVEHVYPLVRSQKQLDRVLTEIEEAPGIVLFTLLEKDLVGRLEAKCEEINIPSLSIIGPVMQLFQAYLGSSTTGRVGAQHTLNAEYFKRIDALNYSMIHDDGQHVEGLEDADVVLVGVSRTSKTPTSIYLANRGIRTANVPLVPGIAIPHQLETLTKPLVVSLHATPERLIQVRQNRLLSMGATVGNEDYIDRQSVNDEVSFARRLSAKYGWALLEVTRRSIEETAAAVMKLLADRQRQRQE.

ADP is bound at residue Gly154 to Thr161.

Belongs to the pyruvate, phosphate/water dikinase regulatory protein family. PDRP subfamily.

The catalysed reaction is N(tele)-phospho-L-histidyl/L-threonyl-[pyruvate, phosphate dikinase] + ADP = N(tele)-phospho-L-histidyl/O-phospho-L-threonyl-[pyruvate, phosphate dikinase] + AMP + H(+). It carries out the reaction N(tele)-phospho-L-histidyl/O-phospho-L-threonyl-[pyruvate, phosphate dikinase] + phosphate + H(+) = N(tele)-phospho-L-histidyl/L-threonyl-[pyruvate, phosphate dikinase] + diphosphate. Functionally, bifunctional serine/threonine kinase and phosphorylase involved in the regulation of the pyruvate, phosphate dikinase (PPDK) by catalyzing its phosphorylation/dephosphorylation. The chain is Putative pyruvate, phosphate dikinase regulatory protein from Rhodopseudomonas palustris (strain BisB18).